A 310-amino-acid polypeptide reads, in one-letter code: GTPase Era (310 aa).

The Era-type G domain occupies His-17–Ala-184. A G1 region spans residues Gly-25–Ser-32. Gly-25–Ser-32 serves as a coordination point for GTP. The tract at residues Gln-51–Ala-55 is G2. The interval Asp-72–Gly-75 is G3. Residues Asp-72–Ile-76 and Asn-134–Asp-137 each bind GTP. The interval Asn-134–Asp-137 is G4. The G5 stretch occupies residues Val-163–Ala-165. Residues Leu-215–Glu-292 form the KH type-2 domain.

This sequence belongs to the TRAFAC class TrmE-Era-EngA-EngB-Septin-like GTPase superfamily. Era GTPase family. In terms of assembly, monomer.

The protein resides in the cytoplasm. The protein localises to the cell inner membrane. In terms of biological role, an essential GTPase that binds both GDP and GTP, with rapid nucleotide exchange. Plays a role in 16S rRNA processing and 30S ribosomal subunit biogenesis and possibly also in cell cycle regulation and energy metabolism. This chain is GTPase Era, found in Mesorhizobium japonicum (strain LMG 29417 / CECT 9101 / MAFF 303099) (Mesorhizobium loti (strain MAFF 303099)).